The primary structure comprises 908 residues: Probable serine/threonine-protein kinase DDB_G0278521 (908 aa).

Residues 1–153 (MSNNKIIESL…RGEKLSTLDR (153 aa)) are Extracellular-facing. The helical transmembrane segment at 154–174 (IICFSIIYSQDQILLFLLNFI) threads the bilayer. Residues 175–908 (LSNINCNNNN…SDQNDSDLYD (734 aa)) lie on the Cytoplasmic side of the membrane. ANK repeat units follow at residues 258–289 (LKVYPIYFAIVKVIGGGSLVRFLLSILPNVYN), 300–326 (TNRSALFYSTTREMTLLLLQLGCNIHD), 330–361 (KGMLPIHYHSLNGHVDVVKCLIDDSTINALDQ), 362–391 (SNNTPLNLASLSGNLSLAKILLNSGARLSI), and 395–424 (NGRYPIHNACVNGNIDLIRYFLELYSKMNS). Positions 461-472 (NSNNLTNSNSSS) are enriched in low complexity. A disordered region spans residues 461–491 (NSNNLTNSNSSSVGGLRISNGGNTQQQSIQI). Positions 480–490 (NGGNTQQQSIQ) are enriched in polar residues. The stretch at 495–524 (ENNTPIDLLVLNNHFTIAIELLKYEGYIVG) is one ANK 6 repeat. Positions 530 to 817 (FKTARKIGAG…LPIANIPKFL (288 aa)) constitute a Protein kinase domain. ATP contacts are provided by residues 536–544 (IGAGAFGDV) and Lys-557. The active-site Proton acceptor is Asp-677.

This sequence belongs to the protein kinase superfamily. TKL Ser/Thr protein kinase family.

It localises to the membrane. The catalysed reaction is L-seryl-[protein] + ATP = O-phospho-L-seryl-[protein] + ADP + H(+). The enzyme catalyses L-threonyl-[protein] + ATP = O-phospho-L-threonyl-[protein] + ADP + H(+). This Dictyostelium discoideum (Social amoeba) protein is Probable serine/threonine-protein kinase DDB_G0278521.